We begin with the raw amino-acid sequence, 206 residues long: Protease (206 aa).

Active-site residues include H54, D71, and C122.

It belongs to the peptidase C5 family. Interacts with protease cofactor pVI-C; this interaction is necessary for protease activation.

It is found in the virion. The protein resides in the host nucleus. The enzyme catalyses Cleaves proteins of the adenovirus and its host cell at two consensus sites: -Yaa-Xaa-Gly-Gly-|-Xaa- and -Yaa-Xaa-Gly-Xaa-|-Gly- (in which Yaa is Met, Ile or Leu, and Xaa is any amino acid).. With respect to regulation, requires DNA and protease cofactor for maximal activation. Inside nascent virions, becomes partially activated by binding to the viral DNA, allowing it to cleave the cofactor that binds to the protease and fully activates it. Actin, like the viral protease cofactor, seems to act as a cofactor in the cleavage of cytokeratin 18 and of actin itself. Cleaves viral precursor proteins (pTP, pIIIa, pVI, pVII, pVIII, and pX) inside newly assembled particles giving rise to mature virions. Protease complexed to its cofactor slides along the viral DNA to specifically locate and cleave the viral precursors. Mature virions have a weakened organization compared to the unmature virions, thereby facilitating subsequent uncoating. Without maturation, the particle lacks infectivity and is unable to uncoat. Late in adenovirus infection, in the cytoplasm, may participate in the cytoskeleton destruction. Cleaves host cell cytoskeletal keratins K7 and K18. The protein is Protease of Homo sapiens (Human).